The primary structure comprises 270 residues: Formamidopyrimidine-DNA glycosylase (270 aa).

Pro2 functions as the Schiff-base intermediate with DNA in the catalytic mechanism. Catalysis depends on Glu3, which acts as the Proton donor. Catalysis depends on Lys58, which acts as the Proton donor; for beta-elimination activity. Positions 90, 109, and 152 each coordinate DNA. The FPG-type zinc finger occupies 237–270 (RVYGREGEPCQCGGVVKRIVQGGRSTFFCPRCQK). Arg260 serves as the catalytic Proton donor; for delta-elimination activity.

This sequence belongs to the FPG family. Monomer. Zn(2+) is required as a cofactor.

It carries out the reaction Hydrolysis of DNA containing ring-opened 7-methylguanine residues, releasing 2,6-diamino-4-hydroxy-5-(N-methyl)formamidopyrimidine.. It catalyses the reaction 2'-deoxyribonucleotide-(2'-deoxyribose 5'-phosphate)-2'-deoxyribonucleotide-DNA = a 3'-end 2'-deoxyribonucleotide-(2,3-dehydro-2,3-deoxyribose 5'-phosphate)-DNA + a 5'-end 5'-phospho-2'-deoxyribonucleoside-DNA + H(+). In terms of biological role, involved in base excision repair of DNA damaged by oxidation or by mutagenic agents. Acts as a DNA glycosylase that recognizes and removes damaged bases. Has a preference for oxidized purines, such as 7,8-dihydro-8-oxoguanine (8-oxoG). Has AP (apurinic/apyrimidinic) lyase activity and introduces nicks in the DNA strand. Cleaves the DNA backbone by beta-delta elimination to generate a single-strand break at the site of the removed base with both 3'- and 5'-phosphates. The sequence is that of Formamidopyrimidine-DNA glycosylase from Novosphingobium aromaticivorans (strain ATCC 700278 / DSM 12444 / CCUG 56034 / CIP 105152 / NBRC 16084 / F199).